The chain runs to 180 residues: Large ribosomal subunit protein uL6 (180 aa).

It belongs to the universal ribosomal protein uL6 family. As to quaternary structure, part of the 50S ribosomal subunit.

This protein binds to the 23S rRNA, and is important in its secondary structure. It is located near the subunit interface in the base of the L7/L12 stalk, and near the tRNA binding site of the peptidyltransferase center. The protein is Large ribosomal subunit protein uL6 of Clostridium botulinum (strain ATCC 19397 / Type A).